A 39-amino-acid polypeptide reads, in one-letter code: Natriuretic peptide PaNP-d (39 aa).

Positions 1 to 8 (SGSKTAEI) are excised as a propeptide. The tract at residues 1 to 39 (SGSKTAEIDDGCFGLPLDPIGSTSGMGCRSVPKPIPGGS) is disordered. A disulfide bridge links cysteine 12 with cysteine 28.

The protein belongs to the natriuretic peptide family. Expressed by the venom gland.

The protein resides in the secreted. In terms of biological role, snake venom natriuretic peptide that targets both NPR1 and NPR2. Exhibits hypotensive and vasodepressor activities. This is Natriuretic peptide PaNP-d from Pseudechis australis (Mulga snake).